Consider the following 405-residue polypeptide: Putative aminotransferase AatC (405 aa).

Lys-238 bears the N6-(pyridoxal phosphate)lysine mark.

Belongs to the class-I pyridoxal-phosphate-dependent aminotransferase family. Homodimer. Pyridoxal 5'-phosphate is required as a cofactor.

The protein localises to the cytoplasm. The sequence is that of Putative aminotransferase AatC (aatC) from Rhizobium meliloti (strain 1021) (Ensifer meliloti).